The chain runs to 146 residues: Hemoglobin subunit beta-1/2 (146 aa).

An N-acetylvaline modification is found at valine 1. Positions 2–146 constitute a Globin domain; sequence HLTPDEKNAV…VATALAHKYH (145 aa). The residue at position 44 (serine 44) is a Phosphoserine. Lysine 59 is modified (N6-acetyllysine). Heme b is bound by residues histidine 63 and histidine 92. Cysteine 93 is subject to S-nitrosocysteine. Lysine 144 is subject to N6-acetyllysine.

The protein belongs to the globin family. As to quaternary structure, heterotetramer of two alpha chains and two beta chains. As to expression, red blood cells.

Involved in oxygen transport from the lung to the various peripheral tissues. The polypeptide is Hemoglobin subunit beta-1/2 (HBB) (Otolemur crassicaudatus (Brown greater galago)).